The sequence spans 512 residues: ETS translocation variant 3 (512 aa).

Residues 35-116 constitute a DNA-binding region (ETS); the sequence is IQLWHFILEL…KGKRFTYKFN (82 aa). The segment at 136–222 is disordered; it reads VPQSAPPVPT…NAIGGGGIGH (87 aa). 3 positions are modified to phosphoserine: Ser-139, Ser-159, and Ser-315. A compositionally biased stretch (polar residues) spans 158-184; that stretch reads HSPTNDVQPGRFSASSLTASGQESSNG. The segment at 336–512 is disordered; it reads PEESTQFSIK…QGLATAAADA (177 aa). A compositionally biased stretch (basic and acidic residues) spans 380–406; the sequence is IKVEPASEKDPESLRQSAREKEEHTQE. Lys-381 participates in a covalent cross-link: Glycyl lysine isopeptide (Lys-Gly) (interchain with G-Cter in SUMO2). N6-acetyllysine; alternate is present on Lys-388. Residue Lys-388 forms a Glycyl lysine isopeptide (Lys-Gly) (interchain with G-Cter in SUMO2); alternate linkage. Acidic residues predominate over residues 443-452; it reads EPLEVTEDIE. 2 stretches are compositionally biased toward basic and acidic residues: residues 453-468 and 479-491; these read DRPGKEPSAPEKKEDA and RWNDDPEARELSK.

The protein belongs to the ETS family.

The protein resides in the nucleus. In terms of biological role, transcriptional repressor that contribute to growth arrest during terminal macrophage differentiation by repressing target genes involved in Ras-dependent proliferation. Represses MMP1 promoter activity. This is ETS translocation variant 3 (ETV3) from Pan troglodytes (Chimpanzee).